Consider the following 149-residue polypeptide: Transcription factor MafF (149 aa).

The interval 51–76 is basic motif; that stretch reads RLKQRRRTLKNRGYAASCRVKRVCQK. The bZIP domain occupies 51-114; it reads RLKQRRRTLK…DTLRGKYEAL (64 aa). The segment at 79–93 is leucine-zipper; the sequence is LQKQKMELEWEVDKL.

Belongs to the bZIP family. Maf subfamily. In terms of assembly, monomer and homo- or heterodimer. Highly expressed in the ovary, lower expression in the brain, heart and mesenterium.

It is found in the nucleus. Its function is as follows. Since it lacks a putative transactivation domain, it may behave as a transcriptional repressor when it dimerizes among itself. May also serve as a transcriptional activator by dimerizing with other (usually larger) basic-zipper proteins and recruiting them to specific DNA-binding sites. May be involved in the cellular stress response. This is Transcription factor MafF (MAFF) from Gallus gallus (Chicken).